The chain runs to 305 residues: Ribosomal protein L11 methyltransferase (305 aa).

Residues T149, G176, D198, and N240 each contribute to the S-adenosyl-L-methionine site.

The protein belongs to the methyltransferase superfamily. PrmA family.

The protein localises to the cytoplasm. The catalysed reaction is L-lysyl-[protein] + 3 S-adenosyl-L-methionine = N(6),N(6),N(6)-trimethyl-L-lysyl-[protein] + 3 S-adenosyl-L-homocysteine + 3 H(+). Its function is as follows. Methylates ribosomal protein L11. The protein is Ribosomal protein L11 methyltransferase of Trichlorobacter lovleyi (strain ATCC BAA-1151 / DSM 17278 / SZ) (Geobacter lovleyi).